A 575-amino-acid polypeptide reads, in one-letter code: Muellerian-inhibiting factor (575 aa).

The N-terminal stretch at 1–24 is a signal peptide; it reads MPGPSLSLALVLSAMGALLRPGTP. Positions 25-466 are excised as a propeptide; sequence REEVFSTSAL…ERSGSARAQR (442 aa). N-linked (GlcNAc...) asparagine glycans are attached at residues asparagine 78 and asparagine 344. Cystine bridges form between cysteine 477–cysteine 541, cysteine 503–cysteine 572, and cysteine 507–cysteine 574.

Belongs to the TGF-beta family. In terms of assembly, homodimer; disulfide-linked. In terms of processing, preproprotein is proteolytically processed to generate N- and C-terminal cleavage products that homodimerize and associate to form a biologically active non-covalent complex. Binding of the non-covalent complex to AMHR2 induces dissociation of the pro-region from the mature C-terminal dimer. The N-terminal portion of the protein, despite having no intrinsic activity, has the role of amplifying the activity of the C-terminus. Expressed in fetal testis and adult ovaries.

It localises to the secreted. Its function is as follows. Plays an important role in several reproductive functions. Induces Muellerian duct regression during male fetal sexual differentiation and plays a role in Leydig cell differentiation and function. In female acts as a negative regulator of the primordial to primary follicle transition and decreases FSH sensitivity of growing follicles. AMH signals by binding to a specific type-II receptor, AMHR2, that heterodimerizes with type-I receptors (ACVR1 and BMPR1A), and recruiting SMAD proteins that are translocated to the nucleus to regulate target gene expression. In Bos taurus (Bovine), this protein is Muellerian-inhibiting factor (AMH).